Here is an 89-residue protein sequence, read N- to C-terminus: Protein RALF-like 5 (89 aa).

The first 25 residues, 1-25 (MLKAQVFMFVTVLVFVCVFINSNDA), serve as a signal peptide directing secretion. 2 cysteine pairs are disulfide-bonded: Cys39–Cys48 and Cys61–Cys67.

This sequence belongs to the plant rapid alkalinization factor (RALF) family.

The protein localises to the secreted. Its function is as follows. Cell signaling peptide that may regulate plant stress, growth, and development. Mediates a rapid alkalinization of extracellular space by mediating a transient increase in the cytoplasmic Ca(2+) concentration leading to a calcium-dependent signaling events through a cell surface receptor and a concomitant activation of some intracellular mitogen-activated protein kinases. This is Protein RALF-like 5 (RALFL5) from Arabidopsis thaliana (Mouse-ear cress).